The following is a 984-amino-acid chain: Protein translocase subunit SecA (984 aa).

ATP-binding positions include Gln96, Gly114–Thr118, and Asp595. 2 stretches are compositionally biased toward basic and acidic residues: residues Glu930–Glu942 and Lys952–Leu971. Positions Glu930–Glu984 are disordered. Over residues Arg972 to Glu984 the composition is skewed to basic residues.

It belongs to the SecA family. In terms of assembly, monomer and homodimer. Part of the essential Sec protein translocation apparatus which comprises SecA, SecYEG and auxiliary proteins SecDF. Other proteins may also be involved.

The protein resides in the cell inner membrane. It localises to the cytoplasm. The enzyme catalyses ATP + H2O + cellular proteinSide 1 = ADP + phosphate + cellular proteinSide 2.. Its function is as follows. Part of the Sec protein translocase complex. Interacts with the SecYEG preprotein conducting channel. Has a central role in coupling the hydrolysis of ATP to the transfer of proteins into and across the cell membrane, serving as an ATP-driven molecular motor driving the stepwise translocation of polypeptide chains across the membrane. In Aquifex aeolicus (strain VF5), this protein is Protein translocase subunit SecA.